The sequence spans 185 residues: Endonuclease IV (185 aa).

It catalyses the reaction Endonucleolytic cleavage of the 5' phosphodiester bond of deoxycytidine in single-stranded DNA.. Its function is as follows. Cleaves single-stranded DNA in a dC-specific manner. The cleavage occurs exclusively at the 5'-proximal position (dC1) within a dCs tract having a minimal size of 6 bases. These specific cleavages may have a detrimental effect on the replication of host dC-containing DNA. This chain is Endonuclease IV (denB), found in Enterobacteria phage T4 (Bacteriophage T4).